We begin with the raw amino-acid sequence, 254 residues long: N-acetylglucosaminyldiphosphoundecaprenol N-acetyl-beta-D-mannosaminyltransferase (254 aa).

The protein belongs to the glycosyltransferase 26 family. TagA/TarA subfamily.

It carries out the reaction UDP-N-acetyl-alpha-D-mannosamine + N-acetyl-alpha-D-glucosaminyl-di-trans,octa-cis-undecaprenyl diphosphate = N-acetyl-beta-D-mannosaminyl-(1-&gt;4)-N-acetyl-alpha-D-glucosaminyl di-trans,octa-cis-undecaprenyl diphosphate + UDP + H(+). Its pathway is cell wall biogenesis; poly(ribitol phosphate) teichoic acid biosynthesis. Catalyzes the conversion of GlcNAc-PP-undecaprenol into ManNAc-GlcNAc-PP-undecaprenol, the first committed lipid intermediate in the de novo synthesis of teichoic acid. The sequence is that of N-acetylglucosaminyldiphosphoundecaprenol N-acetyl-beta-D-mannosaminyltransferase from Staphylococcus aureus (strain NCTC 8325 / PS 47).